A 708-amino-acid polypeptide reads, in one-letter code: Elongation factor G 1 (708 aa).

One can recognise a tr-type G domain in the interval 9–295 (AKVRNIGIMA…AVVRYLPTPL (287 aa)). GTP-binding positions include 18-25 (AHIDAGKT), 86-90 (DTPGH), and 140-143 (NKLD).

This sequence belongs to the TRAFAC class translation factor GTPase superfamily. Classic translation factor GTPase family. EF-G/EF-2 subfamily.

It is found in the cytoplasm. Functionally, catalyzes the GTP-dependent ribosomal translocation step during translation elongation. During this step, the ribosome changes from the pre-translocational (PRE) to the post-translocational (POST) state as the newly formed A-site-bound peptidyl-tRNA and P-site-bound deacylated tRNA move to the P and E sites, respectively. Catalyzes the coordinated movement of the two tRNA molecules, the mRNA and conformational changes in the ribosome. This Streptomyces coelicolor (strain ATCC BAA-471 / A3(2) / M145) protein is Elongation factor G 1 (fusA).